A 437-amino-acid polypeptide reads, in one-letter code: Ribosomal protein uS12 methylthiotransferase RimO (437 aa).

One can recognise an MTTase N-terminal domain in the interval 9 to 124; the sequence is TKVNIVTLGC…LPAILKKFRA (116 aa). 6 residues coordinate [4Fe-4S] cluster: C18, C56, C90, C151, C155, and C158. Positions 137–367 constitute a Radical SAM core domain; sequence TTPSHYAYVK…MSIQEGISAE (231 aa). Residues 370 to 437 enclose the TRAM domain; the sequence is EKKIGNTYKV…EFDLFGEIVK (68 aa).

It belongs to the methylthiotransferase family. RimO subfamily. It depends on [4Fe-4S] cluster as a cofactor.

It is found in the cytoplasm. It catalyses the reaction L-aspartate(89)-[ribosomal protein uS12]-hydrogen + (sulfur carrier)-SH + AH2 + 2 S-adenosyl-L-methionine = 3-methylsulfanyl-L-aspartate(89)-[ribosomal protein uS12]-hydrogen + (sulfur carrier)-H + 5'-deoxyadenosine + L-methionine + A + S-adenosyl-L-homocysteine + 2 H(+). Its function is as follows. Catalyzes the methylthiolation of an aspartic acid residue of ribosomal protein uS12. In Cytophaga hutchinsonii (strain ATCC 33406 / DSM 1761 / CIP 103989 / NBRC 15051 / NCIMB 9469 / D465), this protein is Ribosomal protein uS12 methylthiotransferase RimO.